Reading from the N-terminus, the 249-residue chain is 2,3-bisphosphoglycerate-dependent phosphoglycerate mutase 2 (249 aa).

Substrate contacts are provided by residues 8 to 15 (RHGESIWN), 21 to 22 (TG), R60, 87 to 90 (ERHY), K98, 114 to 115 (RR), and 183 to 184 (GN). H9 functions as the Tele-phosphohistidine intermediate in the catalytic mechanism. The active-site Proton donor/acceptor is the E87.

This sequence belongs to the phosphoglycerate mutase family. BPG-dependent PGAM subfamily. In terms of assembly, homodimer.

It carries out the reaction (2R)-2-phosphoglycerate = (2R)-3-phosphoglycerate. The protein operates within carbohydrate degradation; glycolysis; pyruvate from D-glyceraldehyde 3-phosphate: step 3/5. In terms of biological role, catalyzes the interconversion of 2-phosphoglycerate and 3-phosphoglycerate. The polypeptide is 2,3-bisphosphoglycerate-dependent phosphoglycerate mutase 2 (Nitrosomonas europaea (strain ATCC 19718 / CIP 103999 / KCTC 2705 / NBRC 14298)).